We begin with the raw amino-acid sequence, 188 residues long: MNGVFLAIGALLPICLAGGALLGYAAVRFRVQGDPVAEQVNALLPQTQCGQCGYPGCKPYAEAIAAGDKINKCPPGGEATIRALADLLDLEPEPLDAAEETPPRVAYIREAECIGCTKCIQACPVDAIVGAARLMHTVIADECTGCDLCLEPCPVDCIEMRETPDDVRHWKWPQPSPRLIASDRERAA.

Residues 1–26 (MNGVFLAIGALLPICLAGGALLGYAA) are hydrophobic. The 4Fe-4S domain maps to 32-90 (QGDPVAEQVNALLPQTQCGQCGYPGCKPYAEAIAAGDKINKCPPGGEATIRALADLLDL). Residues Cys-49, Cys-52, Cys-57, Cys-73, Cys-113, Cys-116, Cys-119, Cys-123, Cys-143, Cys-146, Cys-149, and Cys-153 each coordinate [4Fe-4S] cluster. 2 consecutive 4Fe-4S ferredoxin-type domains span residues 104-133 (RVAY…GAAR) and 134-163 (LMHT…MRET).

Belongs to the 4Fe4S bacterial-type ferredoxin family. RnfB subfamily. As to quaternary structure, the complex is composed of six subunits: RnfA, RnfB, RnfC, RnfD, RnfE and RnfG. [4Fe-4S] cluster serves as cofactor.

It localises to the cell inner membrane. Its function is as follows. Part of a membrane-bound complex that couples electron transfer with translocation of ions across the membrane. This Pseudomonas aeruginosa (strain UCBPP-PA14) protein is Ion-translocating oxidoreductase complex subunit B.